We begin with the raw amino-acid sequence, 427 residues long: Peptidase B (427 aa).

Mn(2+) contacts are provided by Lys195 and Asp200. Residue Lys207 is part of the active site. Mn(2+)-binding residues include Asp218, Asp277, and Glu279. Residue Arg281 is part of the active site.

It belongs to the peptidase M17 family. Homohexamer. Requires Mn(2+) as cofactor.

It is found in the cytoplasm. It carries out the reaction Release of an N-terminal amino acid, Xaa, from a peptide or arylamide. Xaa is preferably Glu or Asp but may be other amino acids, including Leu, Met, His, Cys and Gln.. Functionally, probably plays an important role in intracellular peptide degradation. The protein is Peptidase B of Escherichia coli (strain SMS-3-5 / SECEC).